Consider the following 121-residue polypeptide: Mu-hexatoxin-Mg1a (121 aa).

Residues 1-20 (MMTLSPFLLLLIAAVVIGNA) form the signal peptide. A propeptide spanning residues 21–80 (SEGEVKNEFEERLKDEFKDPSRSEVAEVILLRELEVLEETLFGKEMTSDTEENRNSREKR) is cleaved from the precursor. 3 disulfides stabilise this stretch: C81/C95, C88/C102, and C94/C116. K120 carries the post-translational modification Lysine amide.

This sequence belongs to the neurotoxin 14 (magi-1) family. 09 (magi-1) subfamily. In terms of tissue distribution, expressed by the venom gland.

The protein localises to the secreted. In terms of biological role, insecticidal neurotoxin. Shows competition for site 3 of insect voltage-gated sodium channels (Nav). Induces flaccid paralysis when injected into lepidopteran larvae. Is not toxic to mice when injected intracranially at 20 pmol/g. This is Mu-hexatoxin-Mg1a from Macrothele gigas (Japanese funnel web spider).